The chain runs to 654 residues: MAKERIVLPSAEFKKNSNITLKDYKSLYKESIENPNKFWAKEANRLTWFKKWTKVLNHDFKNAKVEWFKGGKLNVSYNCLDRHISTPLKNKAALIWEGDNPSESKVLTYYDVYREVNRFANVLKKYGVKKGDRVLVYLPMIPELAITILACTRIGAIHSVVFGGFSPEALQSRIDDCKPKLIVTADGGFRGGKPIELKRNVDIALEKSKEDVKTVIVVRRTGNESGLVWKDGRDYWYHFLIGDPDLSPYCKPESMDAEDPLFILYTSGSTGKPKGVLHTTGGYLLGVNLTFHYVFDIKPEDTYWCTADIGWVTGHSYLVYGPLSNGASSVMFEGVPSYPDAGRFWDVIDKYGVNIFYTAPTAIRALMREGLTHVQKRNLSSLRLLGSVGEPINPEAWEWYFKIIGKEKCPIVDTWWQTETGSIMITALPGAIPQKPGSATLPFFGVQPVLVDNDGKEINDKGEVSGNLCIKSPWPSMMRGVYGDSKRFFDTYFSQFKGYYFTGDGARRDKDGYYWITGRVDDVINVSGHRIGSAEVESALVENRSVAEAAVVGFPHDIKGQGIYAYVTVKEGIATNDTLKKELVAIVEKVIGKIARPDVIHWAPSLPKTRSGKIMRRILRKIASGEFEGLGDTSTLADPSVVQKLIEDKRKFHS.

Residues 190 to 193 and threonine 313 contribute to the CoA site; that span reads RGGK. Residues 389–391, 413–418, aspartate 504, and arginine 519 contribute to the ATP site; these read GEP and DTWWQT. Serine 527 is a CoA binding site. Arginine 530 is an ATP binding site. Mg(2+)-binding residues include valine 541 and valine 546. Lysine 613 is modified (N6-acetyllysine).

This sequence belongs to the ATP-dependent AMP-binding enzyme family. Requires Mg(2+) as cofactor. Post-translationally, acetylated. Deacetylation by the SIR2-homolog deacetylase activates the enzyme.

It catalyses the reaction acetate + ATP + CoA = acetyl-CoA + AMP + diphosphate. Functionally, catalyzes the conversion of acetate into acetyl-CoA (AcCoA), an essential intermediate at the junction of anabolic and catabolic pathways. AcsA undergoes a two-step reaction. In the first half reaction, AcsA combines acetate with ATP to form acetyl-adenylate (AcAMP) intermediate. In the second half reaction, it can then transfer the acetyl group from AcAMP to the sulfhydryl group of CoA, forming the product AcCoA. The chain is Acetyl-coenzyme A synthetase from Leptospira borgpetersenii serovar Hardjo-bovis (strain JB197).